The primary structure comprises 49 residues: L-amino-acid oxidase (49 aa).

Residue 43–44 (MS) coordinates FAD.

This sequence belongs to the flavin monoamine oxidase family. FIG1 subfamily. Homodimer; non-covalently linked. The cofactor is FAD. N-glycosylated. As to expression, expressed by the venom gland.

It is found in the secreted. It carries out the reaction an L-alpha-amino acid + O2 + H2O = a 2-oxocarboxylate + H2O2 + NH4(+). It catalyses the reaction L-leucine + O2 + H2O = 4-methyl-2-oxopentanoate + H2O2 + NH4(+). In terms of biological role, catalyzes an oxidative deamination of predominantly hydrophobic and aromatic L-amino acids, thus producing hydrogen peroxide that may contribute to the diverse toxic effects of this enzyme. Shows activity on L-Leu. Exhibits diverse biological activities, such as hemorrhage, hemolysis, edema, antibacterial and antiparasitic activities, as well as regulation of platelet aggregation. Its effect on platelets is controversial, since it either induces aggregation or inhibits agonist-induced aggregation. These different effects are probably due to different experimental conditions. In addition, this protein induces apoptosis and necrosis and has inhibitory effects on rat kidney function (decrease of blood flow and glomerular filtration). The polypeptide is L-amino-acid oxidase (Bothrops insularis (Golden lancehead)).